Consider the following 150-residue polypeptide: Large ribosomal subunit protein bL9 (150 aa).

This sequence belongs to the bacterial ribosomal protein bL9 family.

Binds to the 23S rRNA. The polypeptide is Large ribosomal subunit protein bL9 (Leptothrix cholodnii (strain ATCC 51168 / LMG 8142 / SP-6) (Leptothrix discophora (strain SP-6))).